An 879-amino-acid polypeptide reads, in one-letter code: DNA methyltransferase A (879 aa).

Belongs to the methyltransferase superfamily.

It carries out the reaction a 2'-deoxyadenosine in DNA + S-adenosyl-L-methionine = an N(6)-methyl-2'-deoxyadenosine in DNA + S-adenosyl-L-homocysteine + H(+). Functionally, recognizes the double-stranded sequence 5'-GACGAG-3' and methylates A-5, yielding m6A. m6A methylation functions as a transcriptional modifier, promoting transcription of a number of genes (at least scpA, hbs, rnhC, yumC and zapA). One studied mechanism is via transcriptional repressor ScoC (also called hpr) which binds to non-methylated scpA promoter; when the m6A target is methylated ScoC no longer binds and scpA transcription is up-regulated. Other mechanisms for gene expression regulation probably exist. Binds DNA with and without the target sequence. Although it resembles a restriction-modification system, it does not have detectable endonuclease activity under tested conditions. A gamma subtype methylase. This Bacillus subtilis (strain 168) protein is DNA methyltransferase A.